The chain runs to 227 residues: UPF0173 metal-dependent hydrolase BALH_4194 (227 aa).

It belongs to the UPF0173 family.

This is UPF0173 metal-dependent hydrolase BALH_4194 from Bacillus thuringiensis (strain Al Hakam).